Consider the following 203-residue polypeptide: Holliday junction branch migration complex subunit RuvA (203 aa).

A domain I region spans residues 1–63; it reads MIGKLSGKVD…EEHMHLYGFL (63 aa). The segment at 64–142 is domain II; it reads TLEEKIFFNL…KISSGSAIIK (79 aa). The flexible linker stretch occupies residues 143-149; it reads ESLNIKN. Positions 150–203 are domain III; that stretch reads ITPVASNEVIKALVNLGFSRFEAQNAVQGIITQNPEISIDELIKTALKNRNSNF.

The protein belongs to the RuvA family. In terms of assembly, homotetramer. Forms an RuvA(8)-RuvB(12)-Holliday junction (HJ) complex. HJ DNA is sandwiched between 2 RuvA tetramers; dsDNA enters through RuvA and exits via RuvB. An RuvB hexamer assembles on each DNA strand where it exits the tetramer. Each RuvB hexamer is contacted by two RuvA subunits (via domain III) on 2 adjacent RuvB subunits; this complex drives branch migration. In the full resolvosome a probable DNA-RuvA(4)-RuvB(12)-RuvC(2) complex forms which resolves the HJ.

The protein resides in the cytoplasm. Its function is as follows. The RuvA-RuvB-RuvC complex processes Holliday junction (HJ) DNA during genetic recombination and DNA repair, while the RuvA-RuvB complex plays an important role in the rescue of blocked DNA replication forks via replication fork reversal (RFR). RuvA specifically binds to HJ cruciform DNA, conferring on it an open structure. The RuvB hexamer acts as an ATP-dependent pump, pulling dsDNA into and through the RuvAB complex. HJ branch migration allows RuvC to scan DNA until it finds its consensus sequence, where it cleaves and resolves the cruciform DNA. This chain is Holliday junction branch migration complex subunit RuvA, found in Rickettsia peacockii (strain Rustic).